Consider the following 920-residue polypeptide: Androgen receptor (920 aa).

Residues Met1–Thr559 are modulating. The interaction with ZNF318 stretch occupies residues Met1–Ala587. 2 disordered regions span residues Asn36–Leu167 and Gln195–Gly228. The segment covering Ala44–Gln91 has biased composition (low complexity). Ser83 carries the post-translational modification Phosphoserine; by CDK9. A Phosphoserine modification is found at Ser96. Residues Gln195 to Ala217 show a composition bias toward low complexity. The segment covering Pro218–Gly228 has biased composition (polar residues). A Phosphotyrosine; by CSK modification is found at Tyr225. Ser258 carries the phosphoserine modification. A Phosphotyrosine; by CSK and TNK2 modification is found at Tyr269. A phosphotyrosine; by CSK mark is found at Tyr309, Tyr348, Tyr359, and Tyr364. Position 365 is a phosphotyrosine; by CSK and TNK2 (Tyr365). Lys388 participates in a covalent cross-link: Glycyl lysine isopeptide (Lys-Gly) (interchain with G-Cter in SUMO). At Tyr395 the chain carries Phosphotyrosine; by CSK. Residue Lys521 forms a Glycyl lysine isopeptide (Lys-Gly) (interchain with G-Cter in SUMO) linkage. Phosphotyrosine; by CSK occurs at positions 535 and 552. An interaction with LPXN region spans residues Tyr552–Thr919. NR C4-type zinc fingers lie at residues Cys560–Cys580 and Cys596–Cys620. A DNA-binding region (nuclear receptor) is located at residues Cys560–Leu632. An interaction with HIPK3 region spans residues Tyr572–Val662. Residues Gln592 to Thr919 form an interaction with CCAR1 region. Positions Met625–Thr919 are interaction with KAT7. Ser651 carries the post-translational modification Phosphoserine; by STK4/MST1. Residues Glu669–Ile900 enclose the NR LBD domain. 17beta-hydroxy-5alpha-androstan-3-one is bound by residues Asn706 and Arg753. Residues Lys846 and Lys848 each participate in a glycyl lysine isopeptide (Lys-Gly) (interchain with G-Cter in ubiquitin) cross-link. Thr878 is a 17beta-hydroxy-5alpha-androstan-3-one binding site. Tyr916 is subject to Phosphotyrosine; by CSK.

This sequence belongs to the nuclear hormone receptor family. NR3 subfamily. As to quaternary structure, binds DNA as a homodimer. Part of a ternary complex containing AR, EFCAB6/DJBP and PARK7. Interacts with HIPK3 and NR0B2 in the presence of androgen. The ligand binding domain interacts with KAT7/HBO1 in the presence of dihydrotestosterone. Interacts with EFCAB6/DJBP, PQBP1, RANBP9, RBAK, SPDEF, SRA1, TGFB1I1 and RREB1. Interacts with ZMIZ1/ZIMP10 and ZMIZ2/ZMIP7 which both enhance its transactivation activity. Interacts with SLC30A9 and RAD54L2/ARIP4. Interacts with MACROD1 (via macro domain). Interacts via the ligand-binding domain with LXXLL and FXXLF motifs from NCOA1, NCOA2, NCOA3 and MAGEA11. Interacts (via nuclear receptor DNA binding domain and nuclear receptor ligand binding domain) with NCOA4. The AR N-terminal poly-Gln region binds Ran resulting in enhancement of AR-mediated transactivation. Ran-binding decreases as the poly-Gln length increases. Interacts with HIP1 (via coiled coil domain). Interacts (via ligand-binding domain) with TRIM68. Interacts with TNK2. Interacts with USP26. Interacts with RNF6. Interacts (regulated by RNF6 probably through polyubiquitination) with RNF14; regulates AR transcriptional activity. Interacts with PRMT2 and TRIM24. Interacts with RACK1. Interacts with RANBP10; this interaction enhances dihydrotestosterone-induced AR transcriptional activity. Interacts with PRPF6 in a hormone-independent way; this interaction enhances dihydrotestosterone-induced AR transcriptional activity. Interacts with STK4/MST1. Interacts with ZIPK/DAPK3. Interacts with LPXN. Interacts with MAK. Part of a complex containing AR, MAK and NCOA3. Interacts with CRY1. Interacts with CCAR1 and GATA2. Interacts with ZNF318. Interacts with BUD31. Interacts with ARID4A. Interacts with ARID4B. Interacts (via NR LBD domain) with ZBTB7A; the interaction is direct and androgen-dependent. Interacts with NCOR1. Interacts with NCOR2. Interacts with CRY2 in a ligand-dependent manner. Post-translationally, sumoylated on Lys-388 (major) and Lys-521. Ubiquitinated. Deubiquitinated by USP26. 'Lys-6' and 'Lys-27'-linked polyubiquitination by RNF6 modulates AR transcriptional activity and specificity. In terms of processing, phosphorylated in prostate cancer cells in response to several growth factors including EGF. Phosphorylation is induced by c-Src kinase (CSK). Tyr-535 is one of the major phosphorylation sites and an increase in phosphorylation and Src kinase activity is associated with prostate cancer progression. Phosphorylation by TNK2 enhances the DNA-binding and transcriptional activity and may be responsible for androgen-independent progression of prostate cancer. Phosphorylation at Ser-83 by CDK9 regulates AR promoter selectivity and cell growth. Phosphorylation by PAK6 leads to AR-mediated transcription inhibition. Palmitoylated by ZDHHC7 and ZDHHC21. Palmitoylation is required for plasma membrane targeting and for rapid intracellular signaling via ERK and AKT kinases and cAMP generation. Mainly expressed in heart and skeletal muscle. As to expression, expressed in basal and stromal cells of the prostate (at protein level).

It localises to the nucleus. The protein localises to the cytoplasm. AIM-100 (4-amino-5,6-biaryl-furo[2,3-d]pyrimidine) suppresses TNK2-mediated phosphorylation at Tyr-269. Inhibits the binding of the Tyr-269 phosphorylated form to androgen-responsive enhancers (AREs) and its transcriptional activity. Functionally, steroid hormone receptors are ligand-activated transcription factors that regulate eukaryotic gene expression and affect cellular proliferation and differentiation in target tissues. Transcription factor activity is modulated by bound coactivator and corepressor proteins like ZBTB7A that recruits NCOR1 and NCOR2 to the androgen response elements/ARE on target genes, negatively regulating androgen receptor signaling and androgen-induced cell proliferation. Transcription activation is also down-regulated by NR0B2. Activated, but not phosphorylated, by HIPK3 and ZIPK/DAPK3. Its function is as follows. Lacks the C-terminal ligand-binding domain and may therefore constitutively activate the transcription of a specific set of genes independently of steroid hormones. This is Androgen receptor (AR) from Homo sapiens (Human).